The sequence spans 182 residues: Rhodanese-like domain-containing protein 15, chloroplastic (182 aa).

Residues 1-65 (METTAFNTTS…TTSRGNVAAE (65 aa)) constitute a chloroplast transit peptide. A Rhodanese domain is found at 82-182 (AQAGYRYLDV…WTENELPVEE (101 aa)). The active-site Cysteine persulfide intermediate is the Cys-142.

The protein resides in the plastid. It localises to the chloroplast. The protein localises to the thylakoid. In Arabidopsis thaliana (Mouse-ear cress), this protein is Rhodanese-like domain-containing protein 15, chloroplastic (STR15).